The sequence spans 155 residues: S-ribosylhomocysteine lyase (155 aa).

Fe cation contacts are provided by His-58, His-62, and Cys-125.

The protein belongs to the LuxS family. As to quaternary structure, homodimer. Fe cation is required as a cofactor.

The enzyme catalyses S-(5-deoxy-D-ribos-5-yl)-L-homocysteine = (S)-4,5-dihydroxypentane-2,3-dione + L-homocysteine. Involved in the synthesis of autoinducer 2 (AI-2) which is secreted by bacteria and is used to communicate both the cell density and the metabolic potential of the environment. The regulation of gene expression in response to changes in cell density is called quorum sensing. Catalyzes the transformation of S-ribosylhomocysteine (RHC) to homocysteine (HC) and 4,5-dihydroxy-2,3-pentadione (DPD). This is S-ribosylhomocysteine lyase from Helicobacter pylori (strain Shi470).